Reading from the N-terminus, the 60-residue chain is Metallothionein A (60 aa).

A beta region spans residues 1–28 (MDPCECSKSGNCNCGGSCTCTNCSCKSC). Cys-4, Cys-6, Cys-12, Cys-14, Cys-18, Cys-20, Cys-23, Cys-25, Cys-28, Cys-32, Cys-33, Cys-35, Cys-36, Cys-40, Cys-43, Cys-47, Cys-49, Cys-54, Cys-58, and Cys-59 together coordinate a divalent metal cation. Residues 29 to 60 (KKSCCPCCPSGCTKCASGCVCKGKTCDTSCCQ) are alpha.

It belongs to the metallothionein superfamily. Type 1 family.

In terms of biological role, metallothioneins have a high content of cysteine residues that bind various heavy metals. The protein is Metallothionein A (mta) of Parachaenichthys charcoti (Charcot's dragonfish).